Reading from the N-terminus, the 500-residue chain is L-arabinose isomerase (500 aa).

The Mn(2+) site is built by glutamate 306, glutamate 331, histidine 348, and histidine 447.

The protein belongs to the arabinose isomerase family. Mn(2+) serves as cofactor.

It catalyses the reaction beta-L-arabinopyranose = L-ribulose. The protein operates within carbohydrate degradation; L-arabinose degradation via L-ribulose; D-xylulose 5-phosphate from L-arabinose (bacterial route): step 1/3. Functionally, catalyzes the conversion of L-arabinose to L-ribulose. The sequence is that of L-arabinose isomerase from Anoxybacillus flavithermus (strain DSM 21510 / WK1).